The chain runs to 360 residues: Phospho-N-acetylmuramoyl-pentapeptide-transferase (360 aa).

10 consecutive transmembrane segments (helical) span residues 21–41 (YLSFRAIVSILTALGISLWMG), 73–93 (TMGGVMILAAITITVLLWADL), 94–114 (TNPYVWAVLAVLLGYGAVGFV), 132–152 (WKYFWQSAIALVVAFALYAHG), 168–188 (VMPQLGLMYIVLTYFVIVGTS), 199–219 (GLAIMPTVLVAAGFAAIAWAT), 239–259 (LVVVCTAMVGAGLGFLWFNTY), 263–283 (VFMGDVGALALGGALGTIAVL), 288–308 (FVLVIMGGVFVMETLSVILQV), and 338–358 (VIVRFWIISIVLVLIGLATLK).

Belongs to the glycosyltransferase 4 family. MraY subfamily. Mg(2+) is required as a cofactor.

It is found in the cell inner membrane. It carries out the reaction UDP-N-acetyl-alpha-D-muramoyl-L-alanyl-gamma-D-glutamyl-meso-2,6-diaminopimeloyl-D-alanyl-D-alanine + di-trans,octa-cis-undecaprenyl phosphate = di-trans,octa-cis-undecaprenyl diphospho-N-acetyl-alpha-D-muramoyl-L-alanyl-D-glutamyl-meso-2,6-diaminopimeloyl-D-alanyl-D-alanine + UMP. Its pathway is cell wall biogenesis; peptidoglycan biosynthesis. Functionally, catalyzes the initial step of the lipid cycle reactions in the biosynthesis of the cell wall peptidoglycan: transfers peptidoglycan precursor phospho-MurNAc-pentapeptide from UDP-MurNAc-pentapeptide onto the lipid carrier undecaprenyl phosphate, yielding undecaprenyl-pyrophosphoryl-MurNAc-pentapeptide, known as lipid I. This chain is Phospho-N-acetylmuramoyl-pentapeptide-transferase, found in Vibrio cholerae serotype O1 (strain M66-2).